The primary structure comprises 84 residues: Small ribosomal subunit protein uS17 (84 aa).

It belongs to the universal ribosomal protein uS17 family. In terms of assembly, part of the 30S ribosomal subunit.

Functionally, one of the primary rRNA binding proteins, it binds specifically to the 5'-end of 16S ribosomal RNA. This Clostridioides difficile (strain 630) (Peptoclostridium difficile) protein is Small ribosomal subunit protein uS17.